A 278-amino-acid polypeptide reads, in one-letter code: NADPH-dependent 7-cyano-7-deazaguanine reductase (278 aa).

87–89 is a binding site for substrate; sequence IES. 89 to 90 is a binding site for NADPH; sequence SK. The active-site Thioimide intermediate is the cysteine 185. Catalysis depends on aspartate 192, which acts as the Proton donor. Residue 224–225 participates in substrate binding; that stretch reads HE. 253–254 is a binding site for NADPH; that stretch reads RG. A disordered region spans residues 255-278; the sequence is GLDINPYRSTNPTFSVQNHRSFRQ. A compositionally biased stretch (polar residues) spans 261–278; the sequence is YRSTNPTFSVQNHRSFRQ.

Belongs to the GTP cyclohydrolase I family. QueF type 2 subfamily. Homodimer.

It is found in the cytoplasm. It catalyses the reaction 7-aminomethyl-7-carbaguanine + 2 NADP(+) = 7-cyano-7-deazaguanine + 2 NADPH + 3 H(+). It functions in the pathway tRNA modification; tRNA-queuosine biosynthesis. Functionally, catalyzes the NADPH-dependent reduction of 7-cyano-7-deazaguanine (preQ0) to 7-aminomethyl-7-deazaguanine (preQ1). The sequence is that of NADPH-dependent 7-cyano-7-deazaguanine reductase from Coxiella burnetii (strain Dugway 5J108-111).